Here is a 1030-residue protein sequence, read N- to C-terminus: Calcium-transporting ATPase 4, plasma membrane-type (1030 aa).

Topologically, residues 1 to 157 (MSNLLRDFEV…NRYTEKPARS (157 aa)) are cytoplasmic. An interaction with calmodulin region spans residues 19 to 30 (ARQRWRSSVSIV). Position 28 is a phosphoserine (Ser28). The chain crosses the membrane as a helical span at residues 158–178 (FLMFVWEALHDITLIILMVCA). At 179–196 (VVSIGVGVATEGFPRGMY) the chain is on the lumenal side. The helical transmembrane segment at 197–217 (DGTGILLSILLVVMVTAISDY) threads the bilayer. Residues 218–345 (KQSLQFRDLD…EDETPLQVKL (128 aa)) are Cytoplasmic-facing. The helical transmembrane segment at 346-365 (NGVATIIGKIGLSFAVLTFV) threads the bilayer. Over 366–395 (VLCIRFVLDKATSGSFTNWSSEDALTLLDY) the chain is Lumenal. A helical transmembrane segment spans residues 396–413 (FAISVTIIVVAVPEGLPL). The Cytoplasmic portion of the chain corresponds to 414–804 (AVTLSLAFAM…RWGRAVYINI (391 aa)). Catalysis depends on Asp451, which acts as the 4-aspartylphosphate intermediate. Positions 749 and 753 each coordinate Mg(2+). Residues 805-823 (QKFVQFQLTVNVVALIINF) traverse the membrane as a helical segment. Residues 824 to 834 (VSACITGSAPL) are Lumenal-facing. Residues 835-855 (TAVQLLWVNMIMDTLGALALA) form a helical membrane-spanning segment. Topologically, residues 856 to 875 (TEPPNEGLMKRAPIARTASF) are cytoplasmic. The chain crosses the membrane as a helical span at residues 876-898 (ITKTMWRNIAGQSVYQLIVLGIL). Over 899 to 910 (NFAGKSLLKLDG) the chain is Lumenal. The helical transmembrane segment at 911-932 (PDSTAVLNTVIFNSFVFCQVFN) threads the bilayer. At 933–950 (EINSREIEKINVFKGMFN) the chain is on the cytoplasmic side. The helical transmembrane segment at 951 to 972 (SWVFTWVMTVTVVFQVIIVEFL) threads the bilayer. Topologically, residues 973 to 982 (GAFASTVPLS) are lumenal. The helical transmembrane segment at 983 to 1004 (WQHWLLSILIGSLNMIVAVILK) threads the bilayer. Over 1005-1030 (CVPVESRHHHDGYDLLPSGPSSSNSA) the chain is Cytoplasmic.

It belongs to the cation transport ATPase (P-type) (TC 3.A.3) family. Type IIB subfamily.

Its subcellular location is the vacuole membrane. The enzyme catalyses Ca(2+)(in) + ATP + H2O = Ca(2+)(out) + ADP + phosphate + H(+). With respect to regulation, activated by calmodulin. In terms of biological role, this magnesium-dependent enzyme catalyzes the hydrolysis of ATP coupled with the translocation of calcium from the cytosol into small vacuoles. This chain is Calcium-transporting ATPase 4, plasma membrane-type (ACA4), found in Arabidopsis thaliana (Mouse-ear cress).